Here is a 654-residue protein sequence, read N- to C-terminus: Fructose-1,6-bisphosphatase class 3 (654 aa).

The disordered stretch occupies residues 288 to 307 (NPAFKPKKRPDKHERLTQRE). The segment covering 298 to 307 (DKHERLTQRE) has biased composition (basic and acidic residues).

It belongs to the FBPase class 3 family. Requires Mn(2+) as cofactor.

It carries out the reaction beta-D-fructose 1,6-bisphosphate + H2O = beta-D-fructose 6-phosphate + phosphate. It participates in carbohydrate biosynthesis; gluconeogenesis. The protein is Fructose-1,6-bisphosphatase class 3 of Staphylococcus aureus (strain MRSA252).